The sequence spans 84 residues: UPF0320 protein YNR077C (84 aa).

This sequence belongs to the UPF0320 family.

This chain is UPF0320 protein YNR077C, found in Saccharomyces cerevisiae (strain ATCC 204508 / S288c) (Baker's yeast).